The following is an 879-amino-acid chain: Protein translocase subunit SecA (879 aa).

ATP-binding positions include glutamine 86, 104–108 (GEGKT), and aspartate 500. Residues cysteine 863, cysteine 865, cysteine 874, and histidine 875 each coordinate Zn(2+).

It belongs to the SecA family. In terms of assembly, monomer and homodimer. Part of the essential Sec protein translocation apparatus which comprises SecA, SecYEG and auxiliary proteins SecDF-YajC and YidC. Zn(2+) serves as cofactor.

The protein localises to the cell inner membrane. It is found in the cytoplasm. The catalysed reaction is ATP + H2O + cellular proteinSide 1 = ADP + phosphate + cellular proteinSide 2.. Functionally, part of the Sec protein translocase complex. Interacts with the SecYEG preprotein conducting channel. Has a central role in coupling the hydrolysis of ATP to the transfer of proteins into and across the cell membrane, serving both as a receptor for the preprotein-SecB complex and as an ATP-driven molecular motor driving the stepwise translocation of polypeptide chains across the membrane. The protein is Protein translocase subunit SecA of Orientia tsutsugamushi (strain Ikeda) (Rickettsia tsutsugamushi).